An 89-amino-acid chain; its full sequence is Cytochrome c6 (89 aa).

The heme c site is built by cysteine 15, cysteine 18, histidine 19, and methionine 61.

It belongs to the cytochrome c family. PetJ subfamily. In terms of assembly, monomer. Binds 1 heme c group covalently per subunit.

The protein resides in the plastid. The protein localises to the chloroplast thylakoid lumen. Functions as an electron carrier between membrane-bound cytochrome b6-f and photosystem I in oxygenic photosynthesis. This chain is Cytochrome c6 (petJ), found in Tetradesmus obliquus (Green alga).